Here is a 273-residue protein sequence, read N- to C-terminus: Large ribosomal subunit protein uL2 (273 aa).

The interval 228-273 (VDHPHGGGEGKTSGGRHPVTPWGFPTKGKKTRKNKRTSKFIVKKRK) is disordered. The segment covering 254-273 (KGKKTRKNKRTSKFIVKKRK) has biased composition (basic residues).

Belongs to the universal ribosomal protein uL2 family. Part of the 50S ribosomal subunit. Forms a bridge to the 30S subunit in the 70S ribosome.

Functionally, one of the primary rRNA binding proteins. Required for association of the 30S and 50S subunits to form the 70S ribosome, for tRNA binding and peptide bond formation. It has been suggested to have peptidyltransferase activity; this is somewhat controversial. Makes several contacts with the 16S rRNA in the 70S ribosome. The polypeptide is Large ribosomal subunit protein uL2 (Rickettsia massiliae (strain Mtu5)).